A 237-amino-acid polypeptide reads, in one-letter code: Aliphatic sulfonates import ATP-binding protein SsuB 1 (237 aa).

The region spanning 5–221 (LMDIRVEHKA…PRDRRDPLLA (217 aa)) is the ABC transporter domain. 38–45 (GPSGCGKS) contacts ATP.

It belongs to the ABC transporter superfamily. Aliphatic sulfonates importer (TC 3.A.1.17.2) family. As to quaternary structure, the complex is composed of two ATP-binding proteins (SsuB), two transmembrane proteins (SsuC) and a solute-binding protein (SsuA).

The protein localises to the cell inner membrane. The catalysed reaction is ATP + H2O + aliphatic sulfonate-[sulfonate-binding protein]Side 1 = ADP + phosphate + aliphatic sulfonateSide 2 + [sulfonate-binding protein]Side 1.. Functionally, part of the ABC transporter complex SsuABC involved in aliphatic sulfonates import. Responsible for energy coupling to the transport system. This Pseudomonas syringae pv. syringae (strain B728a) protein is Aliphatic sulfonates import ATP-binding protein SsuB 1.